The following is a 263-amino-acid chain: Hydroxyethylthiazole kinase 1 (263 aa).

Methionine 42 provides a ligand contact to substrate. Lysine 118 and threonine 164 together coordinate ATP. Substrate is bound at residue glycine 191.

It belongs to the Thz kinase family. Requires Mg(2+) as cofactor.

The catalysed reaction is 5-(2-hydroxyethyl)-4-methylthiazole + ATP = 4-methyl-5-(2-phosphooxyethyl)-thiazole + ADP + H(+). It functions in the pathway cofactor biosynthesis; thiamine diphosphate biosynthesis; 4-methyl-5-(2-phosphoethyl)-thiazole from 5-(2-hydroxyethyl)-4-methylthiazole: step 1/1. Functionally, catalyzes the phosphorylation of the hydroxyl group of 4-methyl-5-beta-hydroxyethylthiazole (THZ). The polypeptide is Hydroxyethylthiazole kinase 1 (Clostridium botulinum (strain ATCC 19397 / Type A)).